The sequence spans 340 residues: GTP 3',8-cyclase (340 aa).

Positions 8–227 (KLGRPIRDLR…TMIEQHFEID (220 aa)) constitute a Radical SAM core domain. Arg-17 serves as a coordination point for GTP. [4Fe-4S] cluster is bound by residues Cys-24 and Cys-28. S-adenosyl-L-methionine is bound at residue Tyr-30. Position 31 (Cys-31) interacts with [4Fe-4S] cluster. Residue Arg-71 participates in GTP binding. Gly-75 contacts S-adenosyl-L-methionine. A GTP-binding site is contributed by Thr-102. Residue Ser-126 participates in S-adenosyl-L-methionine binding. Lys-163 contacts GTP. Met-197 contacts S-adenosyl-L-methionine. [4Fe-4S] cluster-binding residues include Cys-261 and Cys-264. 266 to 268 (RAR) contributes to the GTP binding site. Cys-278 is a binding site for [4Fe-4S] cluster.

The protein belongs to the radical SAM superfamily. MoaA family. In terms of assembly, monomer and homodimer. It depends on [4Fe-4S] cluster as a cofactor.

The catalysed reaction is GTP + AH2 + S-adenosyl-L-methionine = (8S)-3',8-cyclo-7,8-dihydroguanosine 5'-triphosphate + 5'-deoxyadenosine + L-methionine + A + H(+). The protein operates within cofactor biosynthesis; molybdopterin biosynthesis. In terms of biological role, catalyzes the cyclization of GTP to (8S)-3',8-cyclo-7,8-dihydroguanosine 5'-triphosphate. The polypeptide is GTP 3',8-cyclase (Staphylococcus aureus (strain Mu3 / ATCC 700698)).